A 119-amino-acid polypeptide reads, in one-letter code: Large ribosomal subunit protein bL20 (119 aa).

Belongs to the bacterial ribosomal protein bL20 family.

In terms of biological role, binds directly to 23S ribosomal RNA and is necessary for the in vitro assembly process of the 50S ribosomal subunit. It is not involved in the protein synthesizing functions of that subunit. The chain is Large ribosomal subunit protein bL20 from Bradyrhizobium sp. (strain ORS 278).